A 192-amino-acid chain; its full sequence is uncharacterized protein (192 aa).

One can recognise a Nudix hydrolase domain in the interval 29 to 160 (QRQAAVLIPV…PLDVYRRGNS (132 aa)). The short motif at 67–89 (GAVDSTDASLIAAALREAQEEVA) is the Nudix box element. 2 residues coordinate Mg(2+): Glu-83 and Glu-87.

It belongs to the Nudix hydrolase family. PCD1 subfamily. It depends on Mn(2+) as a cofactor. Requires Mg(2+) as cofactor.

Probably mediates the hydrolysis of some nucleoside diphosphate derivatives. This is an uncharacterized protein from Salmonella choleraesuis (strain SC-B67).